The primary structure comprises 296 residues: Acetylglutamate kinase (296 aa).

Substrate is bound by residues G68–G69, R90, and N193.

The protein belongs to the acetylglutamate kinase family. ArgB subfamily.

The protein resides in the cytoplasm. The catalysed reaction is N-acetyl-L-glutamate + ATP = N-acetyl-L-glutamyl 5-phosphate + ADP. It participates in amino-acid biosynthesis; L-arginine biosynthesis; N(2)-acetyl-L-ornithine from L-glutamate: step 2/4. In terms of biological role, catalyzes the ATP-dependent phosphorylation of N-acetyl-L-glutamate. The protein is Acetylglutamate kinase of Acidothermus cellulolyticus (strain ATCC 43068 / DSM 8971 / 11B).